The sequence spans 196 residues: Blue copper protein (196 aa).

The signal sequence occupies residues 1 to 22 (MAGVFKTVTFLVLVFAAVVVFA). The region spanning 23–125 (EDYDVGDDTE…GQKLSITVVA (103 aa)) is the Phytocyanin domain. Residue histidine 66 coordinates Cu cation. A disulfide bridge connects residues cysteine 79 and cysteine 113. N-linked (GlcNAc...) asparagine glycosylation is present at asparagine 98. Cu cation is bound by residues cysteine 107, histidine 112, and glutamine 117. The interval 133–173 (TPGAGATPAPGSTPSTGGTTPPTAGGTTTPSGSSGTTTPAG) is disordered. A compositionally biased stretch (low complexity) spans 135–173 (GAGATPAPGSTPSTGGTTPPTAGGTTTPSGSSGTTTPAG). Asparagine 174 carries GPI-anchor amidated asparagine lipidation. A propeptide spans 175-196 (AASSLGGATFLVAFVSAVVALF) (removed in mature form).

The protein localises to the cell membrane. Its function is as follows. Probably acts as an electron carrier. This chain is Blue copper protein (BCB), found in Arabidopsis thaliana (Mouse-ear cress).